Reading from the N-terminus, the 300-residue chain is Probable alpha-L-glutamate ligase (300 aa).

One can recognise an ATP-grasp domain in the interval 104 to 287; the sequence is LQLLARQGID…IASRMIAWIE (184 aa). ATP is bound by residues Lys141, 178-179, Asp187, and 211-213; these read EY and RSN. Mg(2+) is bound by residues Asp248, Glu260, and Asn262. Residues Asp248, Glu260, and Asn262 each contribute to the Mn(2+) site.

Belongs to the RimK family. Mg(2+) is required as a cofactor. The cofactor is Mn(2+).

This chain is Probable alpha-L-glutamate ligase, found in Klebsiella pneumoniae (strain 342).